We begin with the raw amino-acid sequence, 892 residues long: Alanine--tRNA ligase (892 aa).

Positions 594, 598, 702, and 706 each coordinate Zn(2+).

This sequence belongs to the class-II aminoacyl-tRNA synthetase family. Zn(2+) is required as a cofactor.

Its subcellular location is the cytoplasm. It carries out the reaction tRNA(Ala) + L-alanine + ATP = L-alanyl-tRNA(Ala) + AMP + diphosphate. In terms of biological role, catalyzes the attachment of alanine to tRNA(Ala) in a two-step reaction: alanine is first activated by ATP to form Ala-AMP and then transferred to the acceptor end of tRNA(Ala). Also edits incorrectly charged Ser-tRNA(Ala) and Gly-tRNA(Ala) via its editing domain. The chain is Alanine--tRNA ligase from Pyrobaculum aerophilum (strain ATCC 51768 / DSM 7523 / JCM 9630 / CIP 104966 / NBRC 100827 / IM2).